The sequence spans 353 residues: Putative glycosyltransferase TagX (353 aa).

It belongs to the glycosyltransferase 2 family.

This Staphylococcus aureus (strain MSSA476) protein is Putative glycosyltransferase TagX (tagX).